The following is a 653-amino-acid chain: Dual specificity protein kinase shkB (653 aa).

A disordered region spans residues 112 to 133; it reads NPNNNNNNSNNTNSSDSNQNYS. One can recognise a Protein kinase domain in the interval 174 to 432; the sequence is YNREAKLGSG…FAEISKQRIL (259 aa). ATP is bound by residues 180–188 and K201; that span reads LGSGAFGSV. D298 serves as the catalytic Proton acceptor. The region spanning 534–625 is the SH2 domain; it reads GFMAATSSKN…IKEPFEGGPF (92 aa).

Belongs to the protein kinase superfamily. TKL Ser/Thr protein kinase family. SH2 domain-containing protein kinase subfamily.

The protein localises to the membrane. It carries out the reaction L-seryl-[protein] + ATP = O-phospho-L-seryl-[protein] + ADP + H(+). The catalysed reaction is L-threonyl-[protein] + ATP = O-phospho-L-threonyl-[protein] + ADP + H(+). In terms of biological role, required for proper chemotaxis and phagocytosis; proper spatiotemporal control of F-actin levels in chemotaxing cells. Negative regulator of the PI3K (phosphatidylinositol 3 kinase) pathway. Predominantly phosphorylates serines and threonines and tyrosines at a lower level. The chain is Dual specificity protein kinase shkB (shkB) from Dictyostelium discoideum (Social amoeba).